Here is a 165-residue protein sequence, read N- to C-terminus: Interferon gamma (165 aa).

An N-terminal signal peptide occupies residues 1–23 (MKYTSYILAFQLCIVLGSLGCYC). Gln-24 bears the Pyrrolidone carboxylic acid mark. N-linked (GlcNAc...) asparagine glycosylation is found at Asn-48 and Asn-120.

This sequence belongs to the type II (or gamma) interferon family. Homodimer. Interacts with IFNGR1 (via extracellular domain); this interaction promotes IFNGR1 dimerization. As to expression, released primarily from activated T lymphocytes.

It localises to the secreted. Functionally, type II interferon produced by immune cells such as T-cells and NK cells that plays crucial roles in antimicrobial, antiviral, and antitumor responses by activating effector immune cells and enhancing antigen presentation. Primarily signals through the JAK-STAT pathway after interaction with its receptor IFNGR1 to affect gene regulation. Upon IFNG binding, IFNGR1 intracellular domain opens out to allow association of downstream signaling components JAK2, JAK1 and STAT1, leading to STAT1 activation, nuclear translocation and transcription of IFNG-regulated genes. Many of the induced genes are transcription factors such as IRF1 that are able to further drive regulation of a next wave of transcription. Plays a role in class I antigen presentation pathway by inducing a replacement of catalytic proteasome subunits with immunoproteasome subunits. In turn, increases the quantity, quality, and repertoire of peptides for class I MHC loading. Increases the efficiency of peptide generation also by inducing the expression of activator PA28 that associates with the proteasome and alters its proteolytic cleavage preference. Up-regulates as well MHC II complexes on the cell surface by promoting expression of several key molecules such as cathepsins B/CTSB, H/CTSH, and L/CTSL. Participates in the regulation of hematopoietic stem cells during development and under homeostatic conditions by affecting their development, quiescence, and differentiation. The protein is Interferon gamma (IFNG) of Macaca fascicularis (Crab-eating macaque).